We begin with the raw amino-acid sequence, 194 residues long: Phosphoheptose isomerase (194 aa).

One can recognise an SIS domain in the interval 37-194 (ISDSFKQGGK…LIEFEMAKDV (158 aa)). 52 to 54 (NGG) is a binding site for substrate. 2 residues coordinate Zn(2+): histidine 61 and glutamate 65. Residues glutamate 65, 93 to 94 (ND), 119 to 121 (STS), serine 124, and glutamine 172 contribute to the substrate site. Zn(2+) contacts are provided by glutamine 172 and histidine 180.

This sequence belongs to the SIS family. GmhA subfamily. As to quaternary structure, homotetramer. Zn(2+) serves as cofactor.

It is found in the cytoplasm. It catalyses the reaction 2 D-sedoheptulose 7-phosphate = D-glycero-alpha-D-manno-heptose 7-phosphate + D-glycero-beta-D-manno-heptose 7-phosphate. It participates in carbohydrate biosynthesis; D-glycero-D-manno-heptose 7-phosphate biosynthesis; D-glycero-alpha-D-manno-heptose 7-phosphate and D-glycero-beta-D-manno-heptose 7-phosphate from sedoheptulose 7-phosphate: step 1/1. Catalyzes the isomerization of sedoheptulose 7-phosphate in D-glycero-D-manno-heptose 7-phosphate. This chain is Phosphoheptose isomerase, found in Actinobacillus succinogenes (strain ATCC 55618 / DSM 22257 / CCUG 43843 / 130Z).